A 120-amino-acid chain; its full sequence is Membrane-anchored ubiquitin-fold protein 5 (120 aa).

Residues 7–72 enclose the Ubiquitin-like domain; it reads IELKFRLADG…ILENNKTLSE (66 aa). Cysteine 115 is lipidated: S-palmitoyl cysteine. Cysteine 117 carries the post-translational modification Cysteine methyl ester. Cysteine 117 carries the S-geranylgeranyl cysteine lipid modification. Positions 118–120 are cleaved as a propeptide — removed in mature form; the sequence is CIL.

As to expression, ubiquitous.

The protein resides in the cell membrane. Its function is as follows. May serve as docking site to facilitate the association of other proteins to the plasma membrane. This chain is Membrane-anchored ubiquitin-fold protein 5 (MUB5), found in Arabidopsis thaliana (Mouse-ear cress).